We begin with the raw amino-acid sequence, 58 residues long: DNA-directed RNA polymerases I, II, and III subunit RPABC4 (58 aa).

4 residues coordinate Zn(2+): C19, C22, C36, and C39. The C4-type zinc finger occupies 19 to 39 (CGECHTENEIKSRDPIRCREC).

The protein belongs to the archaeal Rpo12/eukaryotic RPC10 RNA polymerase subunit family. As to quaternary structure, component of the RNA polymerase I (Pol I), RNA polymerase II (Pol II) and RNA polymerase III (Pol III) complexes consisting of at least 13, 12 and 17 subunits, respectively. Pol I complex consists of a ten-subunit catalytic core composed of POLR1A/RPA1, POLR1B/RPA2, POLR1C/RPAC1, POLR1D/RPAC2, POLR1H/RPA12, POLR2E/RPABC1, POLR2F/RPABC2, POLR2H/RPABC3, POLR2K/RPABC4 and POLR2L/RPABC5; a mobile stalk subunit POLR1F/RPA43 protruding from the core and additional subunits homologous to general transcription factors POLR1E/RPA49 and POLR1G/RPA34. Part of Pol I pre-initiation complex (PIC), in which Pol I core assembles with RRN3 and promoter-bound UTBF and SL1/TIF-IB complex. Pol II complex contains a ten-subunit catalytic core composed of POLR2A/RPB1, POLR2B/RPB2, POLR2C/RPB3, POLR2I/RPB9, POLR2J/RPB11, POLR2E/RPABC1, POLR2F/RPABC2, POLR2H/RPABC3, POLR2K/RPABC4 and POLR2L/RPABC5 and a mobile stalk composed of two subunits POLR2D/RPB4 and POLR2G/RPB7. Part of Pol II(G) complex, in which Pol II core associates with an additional subunit POLR2M; unlike conventional Pol II, Pol II(G) functions as a transcriptional repressor. Part of TBP-based Pol II pre-initiation complex (PIC), in which Pol II core assembles with general transcription factors and other specific initiation factors including GTF2E1, GTF2E2, GTF2F1, GTF2F2, TCEA1, ERCC2, ERCC3, GTF2H2, GTF2H3, GTF2H4, GTF2H5, GTF2A1, GTF2A2, GTF2B and TBP; this large multi-subunit PIC complex mediates DNA unwinding and targets Pol II core to the transcription start site where the first phosphodiester bond forms. Pol III complex consists of a ten-subunit catalytic core composed of POLR3A/RPC1, POLR3B/RPC2, POLR1C/RPAC1, POLR1D/RPAC2, POLR3K/RPC10, POLR2E/RPABC1, POLR2F/RPABC2, POLR2H/RPABC3, POLR2K/RPABC4 and POLR2L/RPABC5; a mobile stalk composed of two subunits POLR3H/RPC8 and CRCP/RPC9, protruding from the core and functioning primarily in transcription initiation; and additional subunits homologous to general transcription factors of the RNA polymerase II machinery, POLR3C/RPC3-POLR3F/RPC6-POLR3G/RPC7 heterotrimer required for transcription initiation and POLR3D/RPC4-POLR3E/RPC5 heterodimer involved in both transcription initiation and termination.

It localises to the nucleus. The protein localises to the nucleolus. DNA-dependent RNA polymerase catalyzes the transcription of DNA into RNA using the four ribonucleoside triphosphates as substrates. Common component of RNA polymerases I, II and III which synthesize ribosomal RNA precursors, mRNA precursors and many functional non-coding RNAs, and a small RNAs, such as 5S rRNA and tRNAs, respectively. This is DNA-directed RNA polymerases I, II, and III subunit RPABC4 (Polr2k) from Mus musculus (Mouse).